A 237-amino-acid polypeptide reads, in one-letter code: Protein XpsM (237 aa).

A disordered region spans residues 1-21 (MPAATWTASPSPPNWPVPMPR). Pro residues predominate over residues 10–21 (PSPPNWPVPMPR).

The protein is Protein XpsM (xpsM) of Xanthomonas campestris pv. campestris (strain ATCC 33913 / DSM 3586 / NCPPB 528 / LMG 568 / P 25).